We begin with the raw amino-acid sequence, 490 residues long: Cobyric acid synthase (490 aa).

One can recognise a GATase cobBQ-type domain in the interval 251–444 (GLTIAVIHLP…LHGIFANDAF (194 aa)). Cys329 (nucleophile) is an active-site residue. His436 is an active-site residue.

This sequence belongs to the CobB/CobQ family. CobQ subfamily.

It functions in the pathway cofactor biosynthesis; adenosylcobalamin biosynthesis. Its function is as follows. Catalyzes amidations at positions B, D, E, and G on adenosylcobyrinic A,C-diamide. NH(2) groups are provided by glutamine, and one molecule of ATP is hydrogenolyzed for each amidation. This chain is Cobyric acid synthase, found in Roseiflexus castenholzii (strain DSM 13941 / HLO8).